A 269-amino-acid chain; its full sequence is Protein RKD1 (269 aa).

The RWP-RK domain occupies 106-195 (TTTTKKRRCR…EKMEGEENED (90 aa)). A coiled-coil region spans residues 175-216 (LQKLISNVKELEKMEGEENEDKLRNALEKLEKEKKTIEKLPD). The tract at residues 230 to 269 (CFKANHKRKRRSGMSTPITSSSSSASASSSSYSSVSGFER) is disordered. Low complexity predominate over residues 249–269 (SSSSSASASSSSYSSVSGFER).

It localises to the nucleus. In terms of biological role, putative transcription factor. The chain is Protein RKD1 (RKD1) from Arabidopsis thaliana (Mouse-ear cress).